Here is a 174-residue protein sequence, read N- to C-terminus: Ribosome maturation factor RimM (174 aa).

Positions 97-169 (GNKFYFHEVI…KVVMDLPEGL (73 aa)) constitute a PRC barrel domain.

Belongs to the RimM family. Binds ribosomal protein uS19.

The protein localises to the cytoplasm. Functionally, an accessory protein needed during the final step in the assembly of 30S ribosomal subunit, possibly for assembly of the head region. Essential for efficient processing of 16S rRNA. May be needed both before and after RbfA during the maturation of 16S rRNA. It has affinity for free ribosomal 30S subunits but not for 70S ribosomes. In Flavobacterium psychrophilum (strain ATCC 49511 / DSM 21280 / CIP 103535 / JIP02/86), this protein is Ribosome maturation factor RimM.